The following is a 278-amino-acid chain: Large ribosomal subunit protein uL2 (278 aa).

Residues 201–278 (HGNINDGKAG…IMRSRHQKKK (78 aa)) are disordered. The segment covering 210–221 (GRSRWRGKRPHV) has biased composition (basic residues).

Belongs to the universal ribosomal protein uL2 family. In terms of assembly, part of the 50S ribosomal subunit. Forms a bridge to the 30S subunit in the 70S ribosome.

One of the primary rRNA binding proteins. Required for association of the 30S and 50S subunits to form the 70S ribosome, for tRNA binding and peptide bond formation. It has been suggested to have peptidyltransferase activity; this is somewhat controversial. Makes several contacts with the 16S rRNA in the 70S ribosome. This chain is Large ribosomal subunit protein uL2, found in Allorhizobium ampelinum (strain ATCC BAA-846 / DSM 112012 / S4) (Agrobacterium vitis (strain S4)).